The sequence spans 246 residues: Mitochondrial inner membrane protease ATP23 homolog (246 aa).

H125 contributes to the a divalent metal cation binding site. The active site involves E126. Residue H129 participates in a divalent metal cation binding.

It belongs to the peptidase M76 family. As to quaternary structure, interacts with XRCC6.

This chain is Mitochondrial inner membrane protease ATP23 homolog, found in Homo sapiens (Human).